Here is a 107-residue protein sequence, read N- to C-terminus: U1-lycotoxin-Ls1s (107 aa).

The signal sequence occupies residues 1–20 (MMKVLVVVALLVTLISYSSS). Positions 21–41 (EGIDDLEADELLSLMANEQTR) are excised as a propeptide. Cystine bridges form between Cys-44–Cys-59, Cys-51–Cys-68, Cys-58–Cys-86, and Cys-70–Cys-84.

The protein belongs to the neurotoxin 19 (CSTX) family. 04 (U1-Lctx) subfamily. In terms of tissue distribution, expressed by the venom gland.

The protein localises to the secreted. The sequence is that of U1-lycotoxin-Ls1s from Lycosa singoriensis (Wolf spider).